The primary structure comprises 258 residues: 14-3-3-like protein F (258 aa).

This sequence belongs to the 14-3-3 family.

This Nicotiana tabacum (Common tobacco) protein is 14-3-3-like protein F.